The sequence spans 182 residues: Oligoribonuclease (182 aa).

The Exonuclease domain occupies 8 to 171 (LLWLDMEMTG…ADIYESIDEL (164 aa)). Tyr129 is an active-site residue.

The protein belongs to the oligoribonuclease family.

It is found in the cytoplasm. 3'-to-5' exoribonuclease specific for small oligoribonucleotides. This chain is Oligoribonuclease, found in Thiobacillus denitrificans (strain ATCC 25259 / T1).